A 590-amino-acid polypeptide reads, in one-letter code: Multidrug and toxin extrusion protein 1 (590 aa).

Topologically, residues 1–59 are cytoplasmic; the sequence is MDSITSYNVTQMNGDTKQEKCDDVLSTSSTQKFCGGCRKKLRSLLPVNYKTEIVELLKL. Residues 60 to 80 traverse the membrane as a helical segment; that stretch reads AGPVFISQLMIFLISFVSTVF. Residues 81-88 lie on the Extracellular side of the membrane; that stretch reads CGHLGKTE. Residues 89–109 form a helical membrane-spanning segment; it reads LAGVALAIAVINVTGISIGSG. At 110–137 the chain is on the cytoplasmic side; the sequence is LASACDTLISQTFGSNNLKRVGVILQRG. The chain crosses the membrane as a helical span at residues 138-158; sequence ILILLLACFPCWALLINTEPI. Residues 159-167 lie on the Extracellular side of the membrane; sequence LLAVRQSPN. A helical membrane pass occupies residues 168–188; that stretch reads VASLSQLYVKIFMPALPAAFM. The Cytoplasmic segment spans residues 189 to 199; that stretch reads YQLQGRYLQNQ. A helical transmembrane segment spans residues 200–222; sequence GIIWPQVITGAAGNILNALINYV. Topologically, residues 223–231 are extracellular; the sequence is FLHLLELGV. A helical membrane pass occupies residues 232–254; it reads AGSAAANTISQYSLAVFLYVYIR. Topologically, residues 255 to 274 are cytoplasmic; it reads WKNLHKATWDGWSRDCLQEW. The chain crosses the membrane as a helical span at residues 275–294; that stretch reads GAFIRLALPSMLMLCVEWWT. Topologically, residues 295–313 are extracellular; the sequence is YEIGGFLAGLISETELGAQ. The chain crosses the membrane as a helical span at residues 314–334; sequence SVVYELATIAYMFPLGFAVAA. Residues 335 to 351 are Cytoplasmic-facing; it reads SVRVGNALGAGNTERAK. The helical transmembrane segment at 352-372 threads the bilayer; it reads LSAKVALVCGVLVSCVVATLI. Residues 373–395 are Extracellular-facing; it reads GCTKDVIAYIFTTEEEIVSRVSQ. Residues 396–416 form a helical membrane-spanning segment; it reads VMIMYGFFHLFDAIAGITGGI. At 417-430 the chain is on the cytoplasmic side; it reads VRGAGKQLLGALCN. The chain crosses the membrane as a helical span at residues 431–451; it reads IVGYYFVGFPTGVSLMFALSM. A topological domain (extracellular) is located at residue Gly-452. Residues 453-473 form a helical membrane-spanning segment; it reads IIGLWIGFFGCVFLQSLFFII. Over 474 to 565 the chain is Cytoplasmic; that stretch reads LIYKLDWKKA…TTKQLIVRRG (92 aa). The chain crosses the membrane as a helical span at residues 566–586; the sequence is LAVLLMVLILAGGIVLNEMLV. The Extracellular segment spans residues 587–590; the sequence is RYLR.

This sequence belongs to the multi antimicrobial extrusion (MATE) (TC 2.A.66.1) family.

It localises to the cell membrane. Functionally, solute transporter for tetraethylammonium (TEA), cimetidine, metformin, guanidine, N-methylnicotinamide (NMN) and also the zwitterionic cephalosporin cephalexin. Responsible for the secretion of cationic drugs across the brush border membranes. The sequence is that of Multidrug and toxin extrusion protein 1 (slc47a1) from Danio rerio (Zebrafish).